The following is a 491-amino-acid chain: E3 ubiquitin-protein ligase Hakai (491 aa).

The segment at 1-61 (MDHTDNELQG…PAKAPPGDEE (61 aa)) is disordered. The RING-type zinc finger occupies 109–149 (CDKCGLPIKIYGRMIPCKHVFCYDCAILHEKKGDKMCPGCS). Residues 148-206 (CSDPVQRIEQCTRGSLFMCSIVQGCKRTYLSQRDLQAHINHRHMRAGKPVTRASLENVH) are HYB domain. The C2H2-type zinc-finger motif lies at 164–190 (FMCSIVQGCKRTYLSQRDLQAHINHRH). Ser-201, Ser-285, and Ser-290 each carry phosphoserine. Positions 255-491 (QPHEDIRAPP…DQTRYRPYYQ (237 aa)) are disordered. Composition is skewed to pro residues over residues 342–359 (APPPPPPPPISHPMPHPP), 372–389 (APPPPMTSAPPPITPPPG), and 399–423 (MNHPPPGPPPPQHGGPPVTAPPPHH). Residues 427–442 (NSLPQFTEDQGTLSPP) show a composition bias toward polar residues. A compositionally biased stretch (pro residues) spans 457–478 (PRGPPPPPRLQGPPSQTPLPGP).

It belongs to the Hakai family. As to quaternary structure, homodimer. Interacts with tyrosine-phosphorylated SRC substrates. Component of the WMM complex, a N6-methyltransferase complex composed of a catalytic subcomplex, named MAC, and of an associated subcomplex, named MACOM. The MAC subcomplex is composed of METTL3 and METTL14. The MACOM subcomplex is composed of WTAP, ZC3H13, CBLL1/HAKAI, VIRMA, and, in some cases of RBM15 (RBM15 or RBM15B). Also a component of a MACOM-like complex, named WTAP complex, composed of WTAP, ZC3H13, CBLL1, VIRMA, RBM15, BCLAF1 and THRAP3. Phosphorylated on tyrosine residues.

It localises to the nucleus speckle. The protein resides in the nucleus. The protein localises to the nucleoplasm. It is found in the cytoplasm. It carries out the reaction S-ubiquitinyl-[E2 ubiquitin-conjugating enzyme]-L-cysteine + [acceptor protein]-L-lysine = [E2 ubiquitin-conjugating enzyme]-L-cysteine + N(6)-ubiquitinyl-[acceptor protein]-L-lysine.. Its pathway is protein modification; protein ubiquitination. E3 ubiquitin-protein ligase that mediates ubiquitination of several tyrosine-phosphorylated Src substrates, including CDH1, CTTN and DOK1. Targets CDH1 for endocytosis and degradation. Associated component of the WMM complex, a complex that mediates N6-methyladenosine (m6A) methylation of RNAs, a modification that plays a role in the efficiency of mRNA splicing and RNA processing. Its function in the WMM complex is unknown. The chain is E3 ubiquitin-protein ligase Hakai from Homo sapiens (Human).